We begin with the raw amino-acid sequence, 313 residues long: 4-hydroxy-3-methylbut-2-enyl diphosphate reductase (313 aa).

Cysteine 12 serves as a coordination point for [4Fe-4S] cluster. (2E)-4-hydroxy-3-methylbut-2-enyl diphosphate contacts are provided by histidine 41 and histidine 74. 2 residues coordinate dimethylallyl diphosphate: histidine 41 and histidine 74. Isopentenyl diphosphate contacts are provided by histidine 41 and histidine 74. Position 96 (cysteine 96) interacts with [4Fe-4S] cluster. Histidine 124 serves as a coordination point for (2E)-4-hydroxy-3-methylbut-2-enyl diphosphate. Histidine 124 contributes to the dimethylallyl diphosphate binding site. Histidine 124 lines the isopentenyl diphosphate pocket. Catalysis depends on glutamate 126, which acts as the Proton donor. Threonine 164 contacts (2E)-4-hydroxy-3-methylbut-2-enyl diphosphate. Cysteine 194 serves as a coordination point for [4Fe-4S] cluster. (2E)-4-hydroxy-3-methylbut-2-enyl diphosphate contacts are provided by serine 222, serine 223, asparagine 224, and serine 266. The dimethylallyl diphosphate site is built by serine 222, serine 223, asparagine 224, and serine 266. Positions 222, 223, 224, and 266 each coordinate isopentenyl diphosphate.

The protein belongs to the IspH family. Requires [4Fe-4S] cluster as cofactor.

It carries out the reaction isopentenyl diphosphate + 2 oxidized [2Fe-2S]-[ferredoxin] + H2O = (2E)-4-hydroxy-3-methylbut-2-enyl diphosphate + 2 reduced [2Fe-2S]-[ferredoxin] + 2 H(+). The enzyme catalyses dimethylallyl diphosphate + 2 oxidized [2Fe-2S]-[ferredoxin] + H2O = (2E)-4-hydroxy-3-methylbut-2-enyl diphosphate + 2 reduced [2Fe-2S]-[ferredoxin] + 2 H(+). Its pathway is isoprenoid biosynthesis; dimethylallyl diphosphate biosynthesis; dimethylallyl diphosphate from (2E)-4-hydroxy-3-methylbutenyl diphosphate: step 1/1. It participates in isoprenoid biosynthesis; isopentenyl diphosphate biosynthesis via DXP pathway; isopentenyl diphosphate from 1-deoxy-D-xylulose 5-phosphate: step 6/6. Functionally, catalyzes the conversion of 1-hydroxy-2-methyl-2-(E)-butenyl 4-diphosphate (HMBPP) into a mixture of isopentenyl diphosphate (IPP) and dimethylallyl diphosphate (DMAPP). Acts in the terminal step of the DOXP/MEP pathway for isoprenoid precursor biosynthesis. This is 4-hydroxy-3-methylbut-2-enyl diphosphate reductase from Protochlamydia amoebophila (strain UWE25).